The following is a 718-amino-acid chain: Ophiobolin F synthase oblA (718 aa).

A (7Z)-ophiobola-7,19-dien-3-ol synthase region spans residues M1–E320. 2 residues coordinate Mg(2+): D93 and D97. Position 93 (D93) interacts with substrate. The DDXXD 1 signature appears at D93–D97. Substrate-binding positions include R180–D183, N224, S228–E232, and R311–Y312. The short motif at N224–E232 is the NSE/DTE element. A geranylfarnesyl diphosphate synthase region spans residues L321–V718. The tract at residues L346 to T391 is disordered. A compositionally biased stretch (basic and acidic residues) spans G349–L359. Isopentenyl diphosphate is bound by residues K429, R432, and H461. The Mg(2+) site is built by D468 and D472. The short motif at D468–D472 is the DDXXD 2 element. R477 is a binding site for dimethylallyl diphosphate. Position 478 (R478) interacts with isopentenyl diphosphate. Positions 555, 556, 594, 601, 611, and 621 each coordinate dimethylallyl diphosphate.

In the N-terminal section; belongs to the terpene synthase family. It in the C-terminal section; belongs to the FPP/GGPP synthase family. The cofactor is Mg(2+).

The enzyme catalyses isopentenyl diphosphate + (2E,6E)-farnesyl diphosphate = (2E,6E,10E)-geranylgeranyl diphosphate + diphosphate. It catalyses the reaction isopentenyl diphosphate + (2E,6E,10E)-geranylgeranyl diphosphate = (2E,6E,10E,14E)-geranylfarnesyl diphosphate + diphosphate. The catalysed reaction is (2E,6E,10E,14E)-geranylfarnesyl diphosphate + H2O = ophiobolin F + diphosphate. Its pathway is secondary metabolite biosynthesis; terpenoid biosynthesis. Functionally, bifunctional sesterterpene synthase; part of the gene cluster that mediates the biosynthesis of the sesterterpenes ophiobolins, fungal phytotoxins with potential anti-cancer activities. The first step of the pathway is performed by the sesterterpene synthase oblA that possesses both prenyl transferase and terpene cyclase activity, converting isopentenyl diphosphate and dimethylallyl diphosphate into geranylfarnesyl diphosphate (GFPP) and further converting GFPP into ophiobolin F, respectively. Other sesterterpenoids (C(25) terpenoids) are found as minor products of oblA. It is expected that ophiobolin F is then oxidized to ophiobolin A via ophiobolin C and ophiobolin B intermediates by the combined action of the cytochrome P450 monooxygenase oblB and the FAD-dependent oxidoreductase oblC. Although oblB catalyzes multistep oxygenations at C5 and C21/C7 in a relatively efficient manner, it is unable to convert ophiobolin F to ophiobolin C and produces instead several unexpected derivatives. The protein is Ophiobolin F synthase oblA of Aspergillus clavatus (strain ATCC 1007 / CBS 513.65 / DSM 816 / NCTC 3887 / NRRL 1 / QM 1276 / 107).